The primary structure comprises 276 residues: Probable endonuclease 4 (276 aa).

Zn(2+) contacts are provided by His67, His107, Glu142, Asp176, His179, His211, Asp224, His226, and Glu256.

Belongs to the AP endonuclease 2 family. Zn(2+) is required as a cofactor.

It catalyses the reaction Endonucleolytic cleavage to 5'-phosphooligonucleotide end-products.. Its function is as follows. Endonuclease IV plays a role in DNA repair. It cleaves phosphodiester bonds at apurinic or apyrimidinic (AP) sites, generating a 3'-hydroxyl group and a 5'-terminal sugar phosphate. The polypeptide is Probable endonuclease 4 (Methanosphaera stadtmanae (strain ATCC 43021 / DSM 3091 / JCM 11832 / MCB-3)).